Consider the following 384-residue polypeptide: Zinc metalloproteinase nas-12 (384 aa).

An N-terminal signal peptide occupies residues 1 to 25 (MLYIPQFSIYFCLGYLLLFCKISNA). The region spanning 73–271 (VSIKGSSMNR…EKLNRLGQCG (199 aa)) is the Peptidase M12A domain. Disulfide bonds link Cys-116-Cys-270, Cys-137-Cys-156, Cys-287-Cys-325, Cys-296-Cys-318, and Cys-305-Cys-322. His-164 is a binding site for Zn(2+). Residue Glu-165 is part of the active site. His-168 and His-174 together coordinate Zn(2+). One can recognise a ShKT 1 domain in the interval 287–325 (CQDVATAVSCEGNRRRGMCKNPFYKQMMIKSCQKTCRLC). N-linked (GlcNAc...) asparagine glycosylation occurs at Asn-340. 3 disulfides stabilise this stretch: Cys-348–Cys-384, Cys-355–Cys-377, and Cys-364–Cys-381. The region spanning 348-384 (CEDKHPRCDIYSHNGFCTLPFYDDVRYQLCAKTCNLC) is the ShKT 2 domain.

It depends on Zn(2+) as a cofactor. As to expression, expressed in pharyngeal glands.

The protein localises to the secreted. Metalloprotease. The polypeptide is Zinc metalloproteinase nas-12 (nas-12) (Caenorhabditis elegans).